Reading from the N-terminus, the 469-residue chain is Glutamine synthetase (469 aa).

Positions 16 to 100 (EGVQYVDLRF…MICDIYDPVT (85 aa)) constitute a GS beta-grasp domain. A GS catalytic domain is found at 108–469 (TRYIAQKAEQ…PKEFELYWDI (362 aa)). Mg(2+) is bound by residues E133 and E135. E207 is an ATP binding site. 2 residues coordinate Mg(2+): E212 and E220. L-glutamate is bound by residues 264-265 (NG) and G265. Residue H269 coordinates Mg(2+). ATP-binding positions include 271 to 273 (HFS) and S273. L-glutamate is bound by residues R321, E327, and R339. Positions 339, 344, and 353 each coordinate ATP. Residue E358 coordinates Mg(2+). R360 contributes to the L-glutamate binding site. Y398 is modified (O-AMP-tyrosine).

Belongs to the glutamine synthetase family. In terms of assembly, oligomer of 12 subunits arranged in the form of two hexagons. It depends on Mg(2+) as a cofactor.

The protein localises to the cytoplasm. It carries out the reaction L-glutamate + NH4(+) + ATP = L-glutamine + ADP + phosphate + H(+). The activity of this enzyme could be controlled by adenylation under conditions of abundant glutamine. In terms of biological role, catalyzes the ATP-dependent biosynthesis of glutamine from glutamate and ammonia. The protein is Glutamine synthetase of Aquifex aeolicus (strain VF5).